Consider the following 276-residue polypeptide: AT-hook motif nuclear-localized protein 17 (276 aa).

Residues 1 to 10 (MKGEYREQKS) are compositionally biased toward basic and acidic residues. Disordered stretches follow at residues 1 to 80 (MKGE…RDTD) and 212 to 248 (AEEEQKHSAGTGEREGQSPPVSGGGEESGQMAGSGGE). Low complexity-rich tracts occupy residues 20 to 31 (HQQQQQQQQQQH) and 40 to 49 (SSTVTPTVDD). A DNA-binding region (a.T hook) is located at residues 56–68 (RRPRGRPPGSKNK). The 151-residue stretch at 80 to 230 (DPPMSPYILE…GTGEREGQSP (151 aa)) folds into the PPC domain. A compositionally biased stretch (basic and acidic residues) spans 212-227 (AEEEQKHSAGTGEREG). Residues 233–248 (SGGGEESGQMAGSGGE) show a composition bias toward gly residues.

The protein resides in the nucleus. Functionally, transcription factor that specifically binds AT-rich DNA sequences related to the nuclear matrix attachment regions (MARs). The chain is AT-hook motif nuclear-localized protein 17 from Arabidopsis thaliana (Mouse-ear cress).